Reading from the N-terminus, the 778-residue chain is 5-methyltetrahydropteroyltriglutamate--homocysteine methyltransferase (778 aa).

Residues 17-20 (RELK) and Lys-118 each bind 5-methyltetrahydropteroyltri-L-glutamate. L-homocysteine-binding positions include 436–438 (IGS) and Glu-489. Residues 436-438 (IGS) and Glu-489 each bind L-methionine. 5-methyltetrahydropteroyltri-L-glutamate-binding positions include 520-521 (RC) and Trp-566. Asp-604 is a binding site for L-homocysteine. Residue Asp-604 coordinates L-methionine. Glu-610 lines the 5-methyltetrahydropteroyltri-L-glutamate pocket. Residues His-646, Cys-648, and Glu-670 each contribute to the Zn(2+) site. His-699 functions as the Proton donor in the catalytic mechanism. Cys-731 serves as a coordination point for Zn(2+).

It belongs to the vitamin-B12 independent methionine synthase family. Zn(2+) serves as cofactor.

It catalyses the reaction 5-methyltetrahydropteroyltri-L-glutamate + L-homocysteine = tetrahydropteroyltri-L-glutamate + L-methionine. The protein operates within amino-acid biosynthesis; L-methionine biosynthesis via de novo pathway; L-methionine from L-homocysteine (MetE route): step 1/1. Its function is as follows. Catalyzes the transfer of a methyl group from 5-methyltetrahydrofolate to homocysteine resulting in methionine formation. The chain is 5-methyltetrahydropteroyltriglutamate--homocysteine methyltransferase from Vibrio vulnificus (strain CMCP6).